Reading from the N-terminus, the 525-residue chain is Biotinidase (525 aa).

Residues 1–26 (MSRAGRQLALLLCSCCVAVAIPGGLA) form the signal peptide. The region spanning 54-333 (DPLALTSREQ…PGLISAGNAT (280 aa)) is the CN hydrolase domain. Glu-94 serves as the catalytic Proton acceptor. N-linked (GlcNAc...) asparagine glycans are attached at residues Asn-132 and Asn-185. Lys-194 serves as the catalytic Proton donor. Residue Cys-227 is the Nucleophile of the active site. A glycan (N-linked (GlcNAc...) asparagine) is linked at Asn-384.

This sequence belongs to the carbon-nitrogen hydrolase superfamily. BTD/VNN family.

The protein localises to the secreted. Its subcellular location is the extracellular space. It catalyses the reaction biocytin + H2O = biotin + L-lysine. The enzyme catalyses biotin amide + H2O = biotin + NH4(+). Functionally, catalytic release of biotin from biocytin, the product of biotin-dependent carboxylases degradation. This is Biotinidase (BTD) from Bos taurus (Bovine).